The following is a 246-amino-acid chain: Pyridoxine 5'-phosphate synthase (246 aa).

Position 10 (Asn-10) interacts with 3-amino-2-oxopropyl phosphate. 12–13 (DH) serves as a coordination point for 1-deoxy-D-xylulose 5-phosphate. Arg-21 is a 3-amino-2-oxopropyl phosphate binding site. His-46 functions as the Proton acceptor in the catalytic mechanism. Residues Arg-48 and His-53 each coordinate 1-deoxy-D-xylulose 5-phosphate. Catalysis depends on Glu-73, which acts as the Proton acceptor. Thr-103 contributes to the 1-deoxy-D-xylulose 5-phosphate binding site. His-193 (proton donor) is an active-site residue. Residues Gly-194 and 215–216 (GH) contribute to the 3-amino-2-oxopropyl phosphate site.

It belongs to the PNP synthase family. As to quaternary structure, homooctamer; tetramer of dimers.

The protein resides in the cytoplasm. The catalysed reaction is 3-amino-2-oxopropyl phosphate + 1-deoxy-D-xylulose 5-phosphate = pyridoxine 5'-phosphate + phosphate + 2 H2O + H(+). Its pathway is cofactor biosynthesis; pyridoxine 5'-phosphate biosynthesis; pyridoxine 5'-phosphate from D-erythrose 4-phosphate: step 5/5. Functionally, catalyzes the complicated ring closure reaction between the two acyclic compounds 1-deoxy-D-xylulose-5-phosphate (DXP) and 3-amino-2-oxopropyl phosphate (1-amino-acetone-3-phosphate or AAP) to form pyridoxine 5'-phosphate (PNP) and inorganic phosphate. The protein is Pyridoxine 5'-phosphate synthase of Rhodopirellula baltica (strain DSM 10527 / NCIMB 13988 / SH1).